We begin with the raw amino-acid sequence, 258 residues long: 14-3-3 protein homolog (258 aa).

The protein belongs to the 14-3-3 family.

In Encephalitozoon cuniculi (strain GB-M1) (Microsporidian parasite), this protein is 14-3-3 protein homolog.